A 142-amino-acid chain; its full sequence is ATP synthase epsilon chain (142 aa).

The protein belongs to the ATPase epsilon chain family. F-type ATPases have 2 components, CF(1) - the catalytic core - and CF(0) - the membrane proton channel. CF(1) has five subunits: alpha(3), beta(3), gamma(1), delta(1), epsilon(1). CF(0) has three main subunits: a, b and c.

It is found in the cell inner membrane. Produces ATP from ADP in the presence of a proton gradient across the membrane. The chain is ATP synthase epsilon chain from Shewanella sp. (strain ANA-3).